A 213-amino-acid polypeptide reads, in one-letter code: MKALKIALTKGRLEKDAVALLEKAGIDCSSMTDKKRKLIFHSSTQPISFILVKAVDVMTYVKHGVADIGIVGKDVLMEASKSHYEMLDLEIGKCQFCLASTPDFDPSSYRRKIIATKYPTVASKFFREKGEDVEIIKIEGSVEIAPVLDLADAIIDIVETGSTLKENGLIIYEKMYPISARLIVNKASLKQNKTQIFHLIDQLEQAIKEELAE.

The protein belongs to the ATP phosphoribosyltransferase family. Short subfamily. Heteromultimer composed of HisG and HisZ subunits.

The protein resides in the cytoplasm. The catalysed reaction is 1-(5-phospho-beta-D-ribosyl)-ATP + diphosphate = 5-phospho-alpha-D-ribose 1-diphosphate + ATP. It functions in the pathway amino-acid biosynthesis; L-histidine biosynthesis; L-histidine from 5-phospho-alpha-D-ribose 1-diphosphate: step 1/9. Catalyzes the condensation of ATP and 5-phosphoribose 1-diphosphate to form N'-(5'-phosphoribosyl)-ATP (PR-ATP). Has a crucial role in the pathway because the rate of histidine biosynthesis seems to be controlled primarily by regulation of HisG enzymatic activity. The polypeptide is ATP phosphoribosyltransferase (hisG) (Listeria monocytogenes serovar 1/2a (strain ATCC BAA-679 / EGD-e)).